The primary structure comprises 189 residues: Interleukin-23 subunit alpha (189 aa).

Positions 1-19 (MLGSRAVMLLLLLPWTAQG) are cleaved as a signal peptide. C77 and C89 form a disulfide bridge.

This sequence belongs to the IL-6 superfamily. In terms of assembly, heterodimer with IL12B; disulfide-linked. The heterodimer is known as interleukin IL-23. Interacts with IL23R; this interaction enables recruitment of IL12RB1. As to expression, secreted by activated dendritic and phagocytic cells and keratinocytes. Also expressed by dermal Langerhans cells (at protein level).

The protein resides in the secreted. Associates with IL12B to form the pro-inflammatory cytokine IL-23 that plays different roles in innate and adaptive immunity. Released by antigen-presenting cells such as dendritic cells or macrophages, binds to a heterodimeric receptor complex composed of IL12RB1 and IL23R to activate JAK2 and TYK2 which then phosphorylate the receptor to form a docking site leading to the phosphorylation of STAT3 and STAT4. This process leads to activation of several pathways including p38 MAPK or NF-kappa-B and promotes the production of pro-inflammatory cytokines such as interleukin-17A/IL17A. In turn, participates in the early and effective intracellular bacterial clearance. Promotes the expansion and survival of T-helper 17 cells, a CD4-positive helper T-cell subset that produces IL-17, as well as other IL-17-producing cells. In Homo sapiens (Human), this protein is Interleukin-23 subunit alpha (IL23A).